A 287-amino-acid chain; its full sequence is MASGREIKSKIKSVQNTRKVTRALEMVSASKIRKAQEQMKISRPYAQAMKQMIGHLAQANTDYLHPFLIAHKQVKRIGYIVISSDRGLAGGLNNNLFRKILGEMRQWQDKGVEVDIVTIGQKASVFFRRIKVNILGSVTHLGDTPRLEQLIGVIKVMLDAYTEEKLDRVYLVYNRFINTMVQKASFDQLLPLLAAKDKVAHHDWDYLYEPDAATVLEHVMTRYIESLVYQAMLENIASEHAARMVAMKAASDNANKLIGTLQLVYNKARQAAITQEISEIVGGAAAV.

The protein belongs to the ATPase gamma chain family. In terms of assembly, F-type ATPases have 2 components, CF(1) - the catalytic core - and CF(0) - the membrane proton channel. CF(1) has five subunits: alpha(3), beta(3), gamma(1), delta(1), epsilon(1). CF(0) has three main subunits: a, b and c.

The protein localises to the cell inner membrane. In terms of biological role, produces ATP from ADP in the presence of a proton gradient across the membrane. The gamma chain is believed to be important in regulating ATPase activity and the flow of protons through the CF(0) complex. The sequence is that of ATP synthase gamma chain from Xylella fastidiosa (strain M12).